The sequence spans 445 residues: UDP-N-acetylmuramoylalanine--D-glutamate ligase (445 aa).

Position 117–123 (117–123 (GSNGKTT)) interacts with ATP.

This sequence belongs to the MurCDEF family.

It localises to the cytoplasm. It catalyses the reaction UDP-N-acetyl-alpha-D-muramoyl-L-alanine + D-glutamate + ATP = UDP-N-acetyl-alpha-D-muramoyl-L-alanyl-D-glutamate + ADP + phosphate + H(+). It participates in cell wall biogenesis; peptidoglycan biosynthesis. Its function is as follows. Cell wall formation. Catalyzes the addition of glutamate to the nucleotide precursor UDP-N-acetylmuramoyl-L-alanine (UMA). This is UDP-N-acetylmuramoylalanine--D-glutamate ligase from Neisseria gonorrhoeae (strain NCCP11945).